The primary structure comprises 337 residues: Neurogenic differentiation factor 6 (337 aa).

The interval 28–80 (QKQIKKPESFPKQVVLRGKSIKRAPGEETEKEEEEEDREEEDENGLSRRRGLR) is disordered. The span at 54–71 (EETEKEEEEEDREEEDEN) shows a compositional bias: acidic residues. A Nuclear localization signal motif is present at residues 80–86 (RKKKTTK). Positions 94–146 (FRRQEANARERNRMHGLNDALDNLRKVVPCYSKTQKLSKIETLRLAKNYIWAL) constitute a bHLH domain.

As to quaternary structure, efficient DNA binding requires dimerization with another bHLH protein. In terms of tissue distribution, specific to the nervous system of both embryos and adults. Highest levels in the cortical plate of the cerebrum.

It is found in the nucleus. Activates E box-dependent transcription in collaboration with TCF3/E47. May be a trans-acting factor involved in the development and maintenance of the mammalian nervous system. Transactivates the promoter of its own gene. In Mus musculus (Mouse), this protein is Neurogenic differentiation factor 6 (Neurod6).